A 404-amino-acid polypeptide reads, in one-letter code: Propionate kinase (404 aa).

Belongs to the acetokinase family. PduW subfamily.

It localises to the cytoplasm. The catalysed reaction is propanoate + ATP = propanoyl phosphate + ADP. Its pathway is polyol metabolism; 1,2-propanediol degradation. In terms of biological role, works with phosphate acetyltransferase (pta) to capture exogenous propionate and regenerate propionyl-CoA during degradation of 1,2-propanediol (1,2-PD). The polypeptide is Propionate kinase (Citrobacter koseri (strain ATCC BAA-895 / CDC 4225-83 / SGSC4696)).